The sequence spans 163 residues: Nucleotide-binding protein BC_1159 (163 aa).

It belongs to the YajQ family.

Its function is as follows. Nucleotide-binding protein. The protein is Nucleotide-binding protein BC_1159 of Bacillus cereus (strain ATCC 14579 / DSM 31 / CCUG 7414 / JCM 2152 / NBRC 15305 / NCIMB 9373 / NCTC 2599 / NRRL B-3711).